The primary structure comprises 441 residues: Transducin-like enhancer protein 7 (441 aa).

2 disordered regions span residues 1 to 77 (MSGE…QWHL) and 91 to 119 (PDAQ…SSSS). Over residues 27–49 (ESSGVSSQPEPQVQQQLGSLLGV) the composition is skewed to low complexity. The span at 62–76 (PADQETSTVTQQQWH) shows a compositional bias: polar residues. Positions 108 to 119 (GSEVGQPYSSSS) are enriched in low complexity. WD repeat units follow at residues 156-194 (FHGK…AGEK), 204-243 (HPQD…QVRA), 247-285 (STGP…LIRK), 286-325 (HEVP…RLHQ), and 409-441 (EESS…QLLY).

This sequence belongs to the WD repeat Groucho/TLE family.

This is Transducin-like enhancer protein 7 from Homo sapiens (Human).